Here is a 472-residue protein sequence, read N- to C-terminus: Pentatricopeptide repeat-containing protein At5g46100 (472 aa).

PPR repeat units lie at residues 50–84 (DQSS…NCVV), 85–119 (SEDI…DCDP), 120–154 (SQKA…GLPP), 155–190 (TVAS…GCDP), 191–225 (DSYT…DCAP), 226–260 (TVVT…GIEP), 261–295 (NVFT…GCRP), 296–330 (NMVT…GLKP), 331–365 (DAGL…GITP), 373–406 (HVKT…GISV), and 407–441 (EVET…GCIP).

Belongs to the PPR family. P subfamily.

This is Pentatricopeptide repeat-containing protein At5g46100 from Arabidopsis thaliana (Mouse-ear cress).